Consider the following 66-residue polypeptide: Large ribosomal subunit protein uL29 (66 aa).

The protein belongs to the universal ribosomal protein uL29 family.

The polypeptide is Large ribosomal subunit protein uL29 (Kosmotoga olearia (strain ATCC BAA-1733 / DSM 21960 / TBF 19.5.1)).